An 841-amino-acid chain; its full sequence is Outer membrane usher protein MyfC (841 aa).

The N-terminal stretch at 1–26 is a signal peptide; it reads MFFSLKNSVAKLIAFWAICLVLPVWA. A disulfide bridge links C817 with C840.

It belongs to the fimbrial export usher family.

The protein resides in the cell outer membrane. In terms of biological role, involved in the export and assembly of the MyfA fimbrial subunit. This chain is Outer membrane usher protein MyfC (myfC), found in Yersinia enterocolitica.